We begin with the raw amino-acid sequence, 386 residues long: FHA domain-containing protein At4g14490 (386 aa).

Residues 28–78 (IRVGRIVRGNEIAIKDAGISTKHLRIESDSGNWVIQDLGSSNGTLLNSNAL) form the FHA domain. Positions 286-311 (KNKGKNKKADQKPLKSFENDEVTDSG) are disordered. Over residues 292-303 (KKADQKPLKSFE) the composition is skewed to basic and acidic residues.

In Arabidopsis thaliana (Mouse-ear cress), this protein is FHA domain-containing protein At4g14490.